Consider the following 307-residue polypeptide: MTKTEHRCGWVALLGPPNAGKSTLLNSALGHKVAIVTPRAQTTRNQIVGILSEPDAQVIFMDTPGIHQQRGRMNKILLQTAWQSMHSADVILVMLDADLYIKKPDFLENDVKPLMDAVAAEERPVIVAVNKVDLFRDKSKMLPLFIELQKLWPKAEVFPVSALKRDGLPELVKLVKSKLPVAPALYPEDQLSTLPVRFMAAEIVREKLFLALRQELPYSVAVEIEKWDEEEGRDLVTIHAVIYVGRPSHKSMVIGKAGATIKDIGTKARVDIQDLLEKKVHLELWVKVREGWTEDVGFLRSLGLADE.

Residues 7–181 (RCGWVALLGP…VKLVKSKLPV (175 aa)) enclose the Era-type G domain. The tract at residues 15–22 (GPPNAGKS) is G1. Residue 15–22 (GPPNAGKS) participates in GTP binding. The interval 41 to 45 (QTTRN) is G2. The tract at residues 62 to 65 (DTPG) is G3. GTP contacts are provided by residues 62-66 (DTPGI) and 130-133 (NKVD). The segment at 130 to 133 (NKVD) is G4. The interval 160–162 (VSA) is G5. The KH type-2 domain maps to 212–290 (LRQELPYSVA…HLELWVKVRE (79 aa)).

This sequence belongs to the TRAFAC class TrmE-Era-EngA-EngB-Septin-like GTPase superfamily. Era GTPase family. Monomer.

It localises to the cytoplasm. The protein resides in the cell inner membrane. An essential GTPase that binds both GDP and GTP, with rapid nucleotide exchange. Plays a role in 16S rRNA processing and 30S ribosomal subunit biogenesis and possibly also in cell cycle regulation and energy metabolism. This is GTPase Era from Nitratidesulfovibrio vulgaris (strain DSM 19637 / Miyazaki F) (Desulfovibrio vulgaris).